The sequence spans 124 residues: Fluoride-specific ion channel FluC (124 aa).

Helical transmembrane passes span valine 4–tryptophan 24, alanine 32–methionine 52, isoleucine 67–threonine 87, and alanine 101–alanine 121. 2 residues coordinate Na(+): glycine 75 and threonine 78.

The protein belongs to the fluoride channel Fluc/FEX (TC 1.A.43) family.

It localises to the cell inner membrane. The catalysed reaction is fluoride(in) = fluoride(out). Na(+) is not transported, but it plays an essential structural role and its presence is essential for fluoride channel function. In terms of biological role, fluoride-specific ion channel. Important for reducing fluoride concentration in the cell, thus reducing its toxicity. This chain is Fluoride-specific ion channel FluC, found in Geotalea uraniireducens (strain Rf4) (Geobacter uraniireducens).